The chain runs to 284 residues: Nucleotide-binding protein SO_3964 (284 aa).

8–15 is a binding site for ATP; the sequence is GRSGSGKS. Residue 56–59 participates in GTP binding; the sequence is DVRN.

The protein belongs to the RapZ-like family.

In terms of biological role, displays ATPase and GTPase activities. This chain is Nucleotide-binding protein SO_3964, found in Shewanella oneidensis (strain ATCC 700550 / JCM 31522 / CIP 106686 / LMG 19005 / NCIMB 14063 / MR-1).